Reading from the N-terminus, the 142-residue chain is Relaxin-3 (142 aa).

The first 25 residues, 1-25, serve as a signal peptide directing secretion; that stretch reads MARYMLLLLLAVWVLTGELWPGAEA. 3 disulfide bridges follow: cysteine 35–cysteine 129, cysteine 47–cysteine 142, and cysteine 128–cysteine 133. The propeptide at 55-118 is connecting peptide; that stretch reads SDILAHEAMG…GTPGVLRGSR (64 aa).

This sequence belongs to the insulin family. In terms of assembly, heterodimer of a B chain and an A chain linked by two disulfide bonds.

The protein resides in the secreted. May play a role in neuropeptide signaling processes. Ligand for LGR7, RXFP3 and RXFP4. The sequence is that of Relaxin-3 (RLN3) from Homo sapiens (Human).